Here is a 177-residue protein sequence, read N- to C-terminus: Probable DNA-directed RNA polymerase subunit delta (177 aa).

Residues 14–81 (CSMIEVVHSV…GENRWGLRSW (68 aa)) form the HTH HARE-type domain. The interval 90-177 (EILPQPKPKK…ETEEEEEEEL (88 aa)) is disordered. Positions 106 to 177 (DGFDDYIEED…ETEEEEEEEL (72 aa)) are enriched in acidic residues.

It belongs to the RpoE family. As to quaternary structure, RNAP is composed of a core of 2 alpha, a beta and a beta' subunits. The core is associated with a delta subunit and one of several sigma factors.

Functionally, participates in both the initiation and recycling phases of transcription. In the presence of the delta subunit, RNAP displays an increased specificity of transcription, a decreased affinity for nucleic acids, and an increased efficiency of RNA synthesis because of enhanced recycling. This is Probable DNA-directed RNA polymerase subunit delta from Bacillus cereus (strain B4264).